The sequence spans 208 residues: 3-isopropylmalate dehydratase small subunit (208 aa).

The protein belongs to the LeuD family. LeuD type 1 subfamily. In terms of assembly, heterodimer of LeuC and LeuD.

The catalysed reaction is (2R,3S)-3-isopropylmalate = (2S)-2-isopropylmalate. It functions in the pathway amino-acid biosynthesis; L-leucine biosynthesis; L-leucine from 3-methyl-2-oxobutanoate: step 2/4. Its function is as follows. Catalyzes the isomerization between 2-isopropylmalate and 3-isopropylmalate, via the formation of 2-isopropylmaleate. The chain is 3-isopropylmalate dehydratase small subunit from Granulibacter bethesdensis (strain ATCC BAA-1260 / CGDNIH1).